Reading from the N-terminus, the 344-residue chain is Serpentine receptor class alpha-27 (344 aa).

A run of 7 helical transmembrane segments spans residues S28–L48, Q67–I87, G128–V148, M157–V177, A203–I223, I252–I272, and I287–Y307.

This sequence belongs to the nematode receptor-like protein sra family.

It localises to the membrane. This Caenorhabditis elegans protein is Serpentine receptor class alpha-27 (sra-27).